We begin with the raw amino-acid sequence, 324 residues long: Homoserine kinase (324 aa).

87 to 97 contacts ATP; it reads PVARGMGSSAA.

Belongs to the GHMP kinase family. Homoserine kinase subfamily.

The protein resides in the cytoplasm. The catalysed reaction is L-homoserine + ATP = O-phospho-L-homoserine + ADP + H(+). The protein operates within amino-acid biosynthesis; L-threonine biosynthesis; L-threonine from L-aspartate: step 4/5. Functionally, catalyzes the ATP-dependent phosphorylation of L-homoserine to L-homoserine phosphate. The chain is Homoserine kinase from Symbiobacterium thermophilum (strain DSM 24528 / JCM 14929 / IAM 14863 / T).